Consider the following 365-residue polypeptide: MKKLTVAISAVAASVLMAMSAQAAEIYNKDSNKLDLYGKVNAKHYFSSNDADDGDTTYARLGFKGETQINDQLTGFGQWEYEFKGNRAESQGSSKDKTHLAFAGLKFGDYGSIDYGRNYGVAYDIGAWTDVLPEFGGDTWTQTDVFMTGRTTGFATYRNNDFFGLVDGLNFAAQYQGKNDRSDFDNYTEGNGDGFGFSATYEYEGFGIGATYAKSDRTDTQVNAGKVLPEVFASGKNAEVWAAGLKYDANNIYLATTYSETQNMTVFADHFVANKAQNFEAVAQYQFDFGLRPSVAYLQSKGKDLGVWGDQDLVKYVDVGATYYFNKNMSTFVDYKINLLDKNDFTKALGVSTDDIVAVGLVYQF.

Positions 1 to 23 (MKKLTVAISAVAASVLMAMSAQA) are cleaved as a signal peptide.

Belongs to the Gram-negative porin family. As to quaternary structure, homotrimer.

The protein resides in the host cell outer membrane. Its function is as follows. Forms pores that allow passive diffusion of small molecules across the host cell outer membrane. The chain is Outer membrane porin protein LC (LC) from Enterobacteria phage PA-2 (Bacteriophage PA-2).